Consider the following 104-residue polypeptide: Protein P-30 (104 aa).

Gln1 is modified (pyrrolidone carboxylic acid). The active-site Proton acceptor is the His10. Intrachain disulfides connect Cys19–Cys68, Cys30–Cys75, Cys48–Cys90, and Cys87–Cys104. Residue 31 to 35 coordinates substrate; sequence KDKNT. Catalysis depends on His97, which acts as the Proton donor.

Belongs to the pancreatic ribonuclease family.

Basic protein with antiproliferative/cytotoxic activity against several tumor cell lines in vitro, as well as antitumor in vivo. It exhibits a ribonuclease-like activity against high molecular weight ribosomal RNA. The polypeptide is Protein P-30 (Lithobates pipiens (Northern leopard frog)).